A 309-amino-acid chain; its full sequence is L-aminoadipate-semialdehyde dehydrogenase-phosphopantetheinyl transferase (309 aa).

Residues Arg-47, 86 to 91, and 108 to 111 each bind CoA; these read RTSKGK and NISH. Residues Asp-129 and Glu-181 each coordinate Mg(2+). A CoA-binding site is contributed by 181 to 185; the sequence is ESFIK.

This sequence belongs to the P-Pant transferase superfamily. AcpS family. In terms of assembly, monomer. It depends on Mg(2+) as a cofactor.

Its subcellular location is the cytoplasm. It is found in the cytosol. It carries out the reaction apo-[ACP] + CoA = holo-[ACP] + adenosine 3',5'-bisphosphate + H(+). The enzyme catalyses apo-[ACP] + acetyl-CoA = acetyl-[ACP] + adenosine 3',5'-bisphosphate + H(+). Functionally, catalyzes the post-translational modification of target proteins by phosphopantetheine. Can transfer the 4'-phosphopantetheine moiety from coenzyme A, regardless of whether the CoA is presented in the free thiol form or as an acetyl thioester, to a serine residue of a broad range of acceptors including the acyl carrier domain of FASN. This chain is L-aminoadipate-semialdehyde dehydrogenase-phosphopantetheinyl transferase (Aasdhppt), found in Rattus norvegicus (Rat).